Reading from the N-terminus, the 156-residue chain is Cyclin-dependent kinase inhibitor 2A (156 aa).

Methionine 1 bears the N-acetylmethionine mark. Serine 7 and serine 8 each carry phosphoserine. ANK repeat units follow at residues 11-40 (PSAD…LPNA), 44-72 (YGRR…EPNC), 77-106 (TLTR…RLDV), and 110-139 (WGRL…GTRG). Serine 140 and serine 152 each carry phosphoserine.

The protein belongs to the CDKN2 cyclin-dependent kinase inhibitor family. As to quaternary structure, heterodimer with CDK4 or CDK6. Predominant p16 complexes contained CDK6. Interacts with CDK4 (both 'T-172'-phosphorylated and non-phosphorylated forms); the interaction inhibits cyclin D-CDK4 kinase activity. Interacts with ISCO2. Phosphorylation seems to increase interaction with CDK4. In terms of tissue distribution, widely expressed but not detected in brain or skeletal muscle. Isoform 3 is pancreas-specific.

Its subcellular location is the cytoplasm. The protein resides in the nucleus. Acts as a negative regulator of the proliferation of normal cells by interacting strongly with CDK4 and CDK6. This inhibits their ability to interact with cyclins D and to phosphorylate the retinoblastoma protein. The polypeptide is Cyclin-dependent kinase inhibitor 2A (Homo sapiens (Human)).